We begin with the raw amino-acid sequence, 201 residues long: Glycerol-3-phosphate acyltransferase (201 aa).

5 consecutive transmembrane segments (helical) span residues 10–30 (MLIG…GLIL), 60–80 (LAAA…LIAA), 86–106 (AAIA…WIGF), 116–136 (LGVL…AWIV), and 166–186 (ALAA…RANI).

This sequence belongs to the PlsY family. As to quaternary structure, probably interacts with PlsX.

The protein resides in the cell inner membrane. The catalysed reaction is an acyl phosphate + sn-glycerol 3-phosphate = a 1-acyl-sn-glycero-3-phosphate + phosphate. The protein operates within lipid metabolism; phospholipid metabolism. Functionally, catalyzes the transfer of an acyl group from acyl-phosphate (acyl-PO(4)) to glycerol-3-phosphate (G3P) to form lysophosphatidic acid (LPA). This enzyme utilizes acyl-phosphate as fatty acyl donor, but not acyl-CoA or acyl-ACP. This Brucella canis (strain ATCC 23365 / NCTC 10854 / RM-666) protein is Glycerol-3-phosphate acyltransferase.